The following is a 288-amino-acid chain: NAD kinase (288 aa).

The active-site Proton acceptor is Asp73. NAD(+)-binding positions include Asp73–Gly74, Arg78, Asn144–Glu145, Asp174, Thr185–Ser190, and Ala209.

It belongs to the NAD kinase family. Requires a divalent metal cation as cofactor.

It is found in the cytoplasm. The enzyme catalyses NAD(+) + ATP = ADP + NADP(+) + H(+). Functionally, involved in the regulation of the intracellular balance of NAD and NADP, and is a key enzyme in the biosynthesis of NADP. Catalyzes specifically the phosphorylation on 2'-hydroxyl of the adenosine moiety of NAD to yield NADP. This Porphyromonas gingivalis (strain ATCC 33277 / DSM 20709 / CIP 103683 / JCM 12257 / NCTC 11834 / 2561) protein is NAD kinase.